A 154-amino-acid polypeptide reads, in one-letter code: Cytochrome c oxidase subunit 5A, mitochondrial (154 aa).

The N-terminal 45 residues, 1-45 (MLAAALRRCXASVRVLLPKPGAAAPSSWSSSAFRATAAIQSVRCY), are a transit peptide targeting the mitochondrion. An SIFI-degron motif is present at residues 2–21 (LAAALRRCXASVRVLLPKPG). Residues K91 and K117 each carry the N6-acetyllysine modification. Position 145 is a phosphothreonine (T145).

The protein belongs to the cytochrome c oxidase subunit 5A family. Component of the cytochrome c oxidase (complex IV, CIV), a multisubunit enzyme composed of 14 subunits. The complex is composed of a catalytic core of 3 subunits MT-CO1, MT-CO2 and MT-CO3, encoded in the mitochondrial DNA, and 11 supernumerary subunits COX4I, COX5A, COX5B, COX6A, COX6B, COX6C, COX7A, COX7B, COX7C, COX8 and NDUFA4, which are encoded in the nuclear genome. The complex exists as a monomer or a dimer and forms supercomplexes (SCs) in the inner mitochondrial membrane with NADH-ubiquinone oxidoreductase (complex I, CI) and ubiquinol-cytochrome c oxidoreductase (cytochrome b-c1 complex, complex III, CIII), resulting in different assemblies (supercomplex SCI(1)III(2)IV(1) and megacomplex MCI(2)III(2)IV(2)). Interacts with AFG1L. Interacts with RAB5IF. In terms of processing, in response to mitochondrial stress, the precursor protein is ubiquitinated by the SIFI complex in the cytoplasm before mitochondrial import, leading to its degradation. Within the SIFI complex, UBR4 initiates ubiquitin chain that are further elongated or branched by KCMF1.

Its subcellular location is the mitochondrion inner membrane. It functions in the pathway energy metabolism; oxidative phosphorylation. Component of the cytochrome c oxidase, the last enzyme in the mitochondrial electron transport chain which drives oxidative phosphorylation. The respiratory chain contains 3 multisubunit complexes succinate dehydrogenase (complex II, CII), ubiquinol-cytochrome c oxidoreductase (cytochrome b-c1 complex, complex III, CIII) and cytochrome c oxidase (complex IV, CIV), that cooperate to transfer electrons derived from NADH and succinate to molecular oxygen, creating an electrochemical gradient over the inner membrane that drives transmembrane transport and the ATP synthase. Cytochrome c oxidase is the component of the respiratory chain that catalyzes the reduction of oxygen to water. Electrons originating from reduced cytochrome c in the intermembrane space (IMS) are transferred via the dinuclear copper A center (CU(A)) of subunit 2 and heme A of subunit 1 to the active site in subunit 1, a binuclear center (BNC) formed by heme A3 and copper B (CU(B)). The BNC reduces molecular oxygen to 2 water molecules using 4 electrons from cytochrome c in the IMS and 4 protons from the mitochondrial matrix. This Notamacropus parma (Parma wallaby) protein is Cytochrome c oxidase subunit 5A, mitochondrial (COX5A).